Consider the following 151-residue polypeptide: Small ribosomal subunit protein uS19 (151 aa).

Residues 1 to 23 (MVVNKQGSVKSIKRKARKSRKVT) form a disordered region. The span at 11–23 (SIKRKARKSRKVT) shows a compositional bias: basic residues.

It belongs to the universal ribosomal protein uS19 family.

Its function is as follows. Protein S19 forms a complex with S13 that binds strongly to the 16S ribosomal RNA. The chain is Small ribosomal subunit protein uS19 (rps19) from Thermoplasma volcanium (strain ATCC 51530 / DSM 4299 / JCM 9571 / NBRC 15438 / GSS1).